The primary structure comprises 428 residues: Glutamate-1-semialdehyde 2,1-aminomutase 1 (428 aa).

Lysine 267 is modified (N6-(pyridoxal phosphate)lysine).

The protein belongs to the class-III pyridoxal-phosphate-dependent aminotransferase family. HemL subfamily. In terms of assembly, homodimer. The cofactor is pyridoxal 5'-phosphate.

Its subcellular location is the cytoplasm. It catalyses the reaction (S)-4-amino-5-oxopentanoate = 5-aminolevulinate. It participates in porphyrin-containing compound metabolism; protoporphyrin-IX biosynthesis; 5-aminolevulinate from L-glutamyl-tRNA(Glu): step 2/2. This Staphylococcus aureus (strain bovine RF122 / ET3-1) protein is Glutamate-1-semialdehyde 2,1-aminomutase 1.